A 137-amino-acid polypeptide reads, in one-letter code: Urease subunit beta (137 aa).

Residues 118-137 (IIAEENKVSENANKESGYNR) form a disordered region. A compositionally biased stretch (polar residues) spans 126–137 (SENANKESGYNR).

This sequence belongs to the urease beta subunit family. As to quaternary structure, heterotrimer of UreA (gamma), UreB (beta) and UreC (alpha) subunits. Three heterotrimers associate to form the active enzyme.

The protein resides in the cytoplasm. The catalysed reaction is urea + 2 H2O + H(+) = hydrogencarbonate + 2 NH4(+). Its pathway is nitrogen metabolism; urea degradation; CO(2) and NH(3) from urea (urease route): step 1/1. The chain is Urease subunit beta from Staphylococcus xylosus.